The following is a 441-amino-acid chain: Probable cyclic di-GMP phosphodiesterase VC_1348 (441 aa).

In terms of domain architecture, Response regulatory spans 72–187; sequence TILIVDDSPD…LLKSRVHTHL (116 aa). Position 120 is a 4-aspartylphosphate (Asp-120). In terms of domain architecture, HD-GYP spans 214–425; it reads LDRMQDAVVF…FIDIAQKFAD (212 aa).

It catalyses the reaction 3',3'-c-di-GMP + 2 H2O = 2 GMP + 2 H(+). Its function is as follows. Probable phosphodiesterase (PDE) that catalyzes the hydrolysis of cyclic diguanylate (c-di-GMP). Increases motility and decreases biofilm formation in vivo. The sequence is that of Probable cyclic di-GMP phosphodiesterase VC_1348 from Vibrio cholerae serotype O1 (strain ATCC 39315 / El Tor Inaba N16961).